A 408-amino-acid chain; its full sequence is Branched-chain amino acid aminotransferase 2, chloroplastic (408 aa).

A chloroplast-targeting transit peptide spans 1–58 (MDCAAALLPGFHPNYLLCPSRHFSSLLPKTDLSSPLKFQLQNKQLSLASSHGFSPVIC). R152 contacts pyridoxal 5'-phosphate. K254 acts as the Proton acceptor in catalysis. N6-(pyridoxal phosphate)lysine is present on K254. E290 contacts pyridoxal 5'-phosphate.

Belongs to the class-IV pyridoxal-phosphate-dependent aminotransferase family. The cofactor is pyridoxal 5'-phosphate. As to expression, expressed in lupulin glands and leaves.

Its subcellular location is the plastid. The protein resides in the chloroplast. It catalyses the reaction L-isoleucine + 2-oxoglutarate = (S)-3-methyl-2-oxopentanoate + L-glutamate. The enzyme catalyses L-leucine + 2-oxoglutarate = 4-methyl-2-oxopentanoate + L-glutamate. It carries out the reaction L-valine + 2-oxoglutarate = 3-methyl-2-oxobutanoate + L-glutamate. The protein operates within amino-acid biosynthesis; L-isoleucine biosynthesis; L-isoleucine from 2-oxobutanoate: step 4/4. Its pathway is amino-acid biosynthesis; L-leucine biosynthesis; L-leucine from 3-methyl-2-oxobutanoate: step 4/4. It functions in the pathway amino-acid biosynthesis; L-valine biosynthesis; L-valine from pyruvate: step 4/4. Its function is as follows. Converts 2-oxo acids to branched-chain amino acids. Shows no kinetic preferences corresponding to anabolic or catabolic functions, but likely involved in BCAA biosynthesis. The protein is Branched-chain amino acid aminotransferase 2, chloroplastic of Humulus lupulus (European hop).